We begin with the raw amino-acid sequence, 517 residues long: Bifunctional purine biosynthesis protein PurH (517 aa).

In terms of domain architecture, MGS-like spans 1-145 (MSPLALVSVS…KNHKDVSVLV (145 aa)).

Belongs to the PurH family.

It catalyses the reaction (6R)-10-formyltetrahydrofolate + 5-amino-1-(5-phospho-beta-D-ribosyl)imidazole-4-carboxamide = 5-formamido-1-(5-phospho-D-ribosyl)imidazole-4-carboxamide + (6S)-5,6,7,8-tetrahydrofolate. The enzyme catalyses IMP + H2O = 5-formamido-1-(5-phospho-D-ribosyl)imidazole-4-carboxamide. It participates in purine metabolism; IMP biosynthesis via de novo pathway; 5-formamido-1-(5-phospho-D-ribosyl)imidazole-4-carboxamide from 5-amino-1-(5-phospho-D-ribosyl)imidazole-4-carboxamide (10-formyl THF route): step 1/1. The protein operates within purine metabolism; IMP biosynthesis via de novo pathway; IMP from 5-formamido-1-(5-phospho-D-ribosyl)imidazole-4-carboxamide: step 1/1. The protein is Bifunctional purine biosynthesis protein PurH of Prochlorococcus marinus (strain MIT 9301).